Reading from the N-terminus, the 496-residue chain is Apulose kinase (496 aa).

ATP-binding positions include 13 to 15 (TTN), Thr267, Gly308, and 408 to 412 (GATQN).

The protein belongs to the FGGY kinase family.

It carries out the reaction apulose + ATP = apulose 4-phosphate + ADP + H(+). It participates in carbohydrate metabolism. Involved in catabolism of D-apiose. Catalyzes phosphorylation of apulose to form apulose 4-phosphate. This chain is Apulose kinase, found in Pectobacterium atrosepticum (strain SCRI 1043 / ATCC BAA-672) (Erwinia carotovora subsp. atroseptica).